The sequence spans 230 residues: Fibrillarin-like rRNA/tRNA 2'-O-methyltransferase (230 aa).

S-adenosyl-L-methionine contacts are provided by residues Thr87–Thr88, Glu105–Phe106, Asp130–Ala131, and Asp150–Gln153.

Belongs to the methyltransferase superfamily. Fibrillarin family. Interacts with nop5. Component of box C/D small ribonucleoprotein (sRNP) particles that contain rpl7ae, FlpA and nop5, plus a guide RNA.

In terms of biological role, involved in pre-rRNA and tRNA processing. Utilizes the methyl donor S-adenosyl-L-methionine to catalyze the site-specific 2'-hydroxyl methylation of ribose moieties in rRNA and tRNA. Site specificity is provided by a guide RNA that base pairs with the substrate. Methylation occurs at a characteristic distance from the sequence involved in base pairing with the guide RNA. This Methanococcus maripaludis (strain C5 / ATCC BAA-1333) protein is Fibrillarin-like rRNA/tRNA 2'-O-methyltransferase.